Reading from the N-terminus, the 482-residue chain is GTPase Obg (482 aa).

The Obg domain occupies 2-159; the sequence is PRFVDRVVIH…VDLTLELKTV (158 aa). In terms of domain architecture, OBG-type G spans 160-340; sequence ADVGLVGFPS…LTFALWEMIV (181 aa). GTP-binding positions include 166 to 173, 191 to 195, 212 to 215, 292 to 295, and 321 to 323; these read GFPSAGKS, FTTLV, DVPG, NKVD, and STL. Residues Ser173 and Thr193 each contribute to the Mg(2+) site. In terms of domain architecture, OCT spans 358 to 438; the sequence is PIPVDESGFT…IGDMTFDWEP (81 aa). The segment at 441 to 482 is disordered; sequence PAGVDVTMSGRGTDARIDKTDRVGAAERRQARRVRRGQVEPE. A compositionally biased stretch (basic and acidic residues) spans 453 to 469; sequence TDARIDKTDRVGAAERR.

It belongs to the TRAFAC class OBG-HflX-like GTPase superfamily. OBG GTPase family. As to quaternary structure, monomer. Mg(2+) serves as cofactor.

The protein resides in the cytoplasm. Its function is as follows. An essential GTPase which binds GTP, GDP and possibly (p)ppGpp with moderate affinity, with high nucleotide exchange rates and a fairly low GTP hydrolysis rate. Plays a role in control of the cell cycle, stress response, ribosome biogenesis and in those bacteria that undergo differentiation, in morphogenesis control. This Mycobacteroides abscessus (strain ATCC 19977 / DSM 44196 / CCUG 20993 / CIP 104536 / JCM 13569 / NCTC 13031 / TMC 1543 / L948) (Mycobacterium abscessus) protein is GTPase Obg.